Here is a 158-residue protein sequence, read N- to C-terminus: Ribosome maturation factor RimP (158 aa).

This sequence belongs to the RimP family.

The protein localises to the cytoplasm. Required for maturation of 30S ribosomal subunits. The sequence is that of Ribosome maturation factor RimP from Streptococcus suis (strain 98HAH33).